Here is a 175-residue protein sequence, read N- to C-terminus: MEVNATLIDCCDPQKPSRVLFHFLILDAPSPSNLPTYIKELQHRGVRHLVRVCGPTYDATLVKSRGIDVHSWPFDDGAPPTRAVLDSWLKLLDTELARQQEDPSVPPPTIGVHCVAGLGRAPILVALALVEYGNVSALDAIALIREKRKGAINQTQMHWITKYKRRHQGAGCVIM.

One can recognise a Tyrosine-protein phosphatase domain in the interval 15 to 172; it reads KPSRVLFHFL…YKRRHQGAGC (158 aa). A disulfide bridge links Cys-53 with Cys-114. Asp-76 acts as the Proton donor in catalysis. The Phosphocysteine intermediate role is filled by Cys-114. Position 116–120 (116–120) interacts with substrate; it reads AGLGR. Residue Cys-172 is modified to Cysteine methyl ester. Cys-172 is lipidated: S-farnesyl cysteine. Residues 173–175 constitute a propeptide, removed in mature form; sequence VIM.

This sequence belongs to the protein-tyrosine phosphatase family.

It is found in the cytoplasm. The protein resides in the mitochondrion matrix. It localises to the kinetoplast. The protein localises to the secreted. Its subcellular location is the extracellular exosome. The catalysed reaction is O-phospho-L-tyrosyl-[protein] + H2O = L-tyrosyl-[protein] + phosphate. With respect to regulation, activated in a reduced environment which promotes the reduction of the disulfide bond between the regulatory Cys-53 and catalytic Cys-114 residues. Its function is as follows. Has protein tyrosine phosphatase activity and may act as a virulence factor to support intracellular survival in host macrophages. This is Protein tyrosine phosphatase PRL-1 from Leishmania major.